The sequence spans 1708 residues: 187-kDa microtubule-associated protein AIR9 (1708 aa).

The segment covering 67–93 (SSLRVSGTTPVTIRRNSTGGVTENLAG) has biased composition (polar residues). Residues 67–255 (SSLRVSGTTP…KTSTPESRDS (189 aa)) are disordered. Residues 110 to 121 (DPVRRSLPELRK) are compositionally biased toward basic and acidic residues. Residues 122–134 (SSVSSLSAKTVSK) are compositionally biased toward low complexity. Positions 149 to 165 (GSRSLTKSTGFSLSKPE) are enriched in polar residues. Over residues 173–234 (SVSVSSKRAP…SIRSKSFSSP (62 aa)) the composition is skewed to low complexity. LRR repeat units follow at residues 267 to 290 (AGDD…GLHL), 291 to 315 (SPNL…ILNR), 316 to 335 (VKVL…EPLE), 337 to 359 (CKML…LPQL), 360 to 382 (PNLE…SQPR), 384 to 402 (QVLA…FPYL), and 403 to 425 (PVLE…EAAS). A9 repeat units follow at residues 489–584 (PSGY…FAIS), 601–682 (LNGE…QYKY), 698–777 (ITGD…VSTS), 793–878 (IVGD…VYVL), 895–977 (ITGD…RSCM), 994–1073 (VVGA…AISE), 1090–1167 (FLGS…RSIR), 1183–1272 (IPDC…VVVI), 1287–1365 (VRVK…KMSE), 1382–1473 (FTGK…AYAE), and 1489–1569 (IEGQ…VSAS).

As to quaternary structure, interacts with KCBP. In terms of tissue distribution, strongly expressed in dividing cells, like the meristemic region of the root tip.

The protein resides in the cytoplasm. Its subcellular location is the cell cortex. It localises to the cytoskeleton. The protein localises to the phragmoplast. In terms of biological role, microtubule-associated protein that may be involved in the maturation of cell plates and proper insertion of cross-walls after cytokinesis. The polypeptide is 187-kDa microtubule-associated protein AIR9 (Arabidopsis thaliana (Mouse-ear cress)).